Reading from the N-terminus, the 452-residue chain is Ketoisovalerate reductase BEA2 (452 aa).

An NADP(+)-binding site is contributed by 70–75 (GPGNIG). K285 serves as the catalytic Proton donor. Residues N289, N293, and S393 each coordinate substrate. E405 is a binding site for NADP(+).

This sequence belongs to the ketopantoate reductase family.

The catalysed reaction is (R)-2-hydroxy-3-methylbutanoate + NADP(+) = 3-methyl-2-oxobutanoate + NADPH + H(+). In terms of biological role, ketoisovalerate reductase; part of the gene cluster that mediates the biosynthesis of beauvericin (BEA), a non-ribosomal cyclic hexadepsipeptide that shows antibiotic, antifungal, insecticidal, and cancer cell antiproliferative and antihaptotactic activity. Ketoisovalerate reductase BEA2 catalyzes the NADPH-specific reduction of ketoisovaleric acid to hydroxyisovalerate, a precursor for beauvericin biosynthesis. The nonribosomal cyclodepsipeptide synthetase BEA1 then catalyzes the formation of beauvericin via condensation and cyclization of 3 dipeptidol monomers, each composed of one unit of hydroxyisovalerate and one unit of N-methyl-phenylalanine. The sequence is that of Ketoisovalerate reductase BEA2 from Gibberella fujikuroi (strain CBS 195.34 / IMI 58289 / NRRL A-6831) (Bakanae and foot rot disease fungus).